The primary structure comprises 916 residues: Nonsense-mediated mRNA decay factor SMG8 (916 aa).

Positions 566 to 626 (LENSNRTPDT…KNYASQGDAD (61 aa)) are disordered. A compositionally biased stretch (polar residues) spans 589-604 (LSGSQKSQDSASNLTF).

The protein belongs to the SMG8 family.

Involved in nonsense-mediated decay (NMD) of mRNAs containing premature stop codons. Probable component of kinase complex containing SMG1 and recruited to stalled ribosomes. This chain is Nonsense-mediated mRNA decay factor SMG8, found in Aedes aegypti (Yellowfever mosquito).